The following is a 432-amino-acid chain: MVNVVLGSQWGDEGKGKLVDLLVGEYDIVARSAGGNNAGHTIVVNGVKYDFHMLPSGLVNPNCQNLIGNGVVIHVPSFFEELKSLEAKGLKNAKGRLFISSRAHLVFDFHQRTDKLRELELSGASKDGKNIGTTGKGIGPTYSTKASRSGLRVHHLVNDDPQAWEVFETRYRRLVETRQQRYGSFDYDPEEELQRYKSYREQLKPFVVDSVNFMHDAIKKNKKILVEGANALMLDIDFGTYPYVTSSNTGIGGVITGLGIPPRTIKEVFGVVKAYTTRVGEGPFPTEQLNEDGEKLQNIGAEFGVTTGRKRRCGWLDLVVLKYSNLINGYTSLNITKLDVLDTFKEIKVGVSYSVDGKKLESFPEDLLTLAKVEVEYVTLPGWEEDISKITNYEDLPENAQKYLKFIEDFVEVPIQWVGTGPARDAMVHKEI.

Residues 11-17 and 39-41 each bind GTP; these read GDEGKGK and GHT. The Proton acceptor role is filled by Asp12. 2 residues coordinate Mg(2+): Asp12 and Gly39. IMP-binding positions include 12-15, 37-40, Thr134, Arg148, Asn230, Thr245, and Arg309; these read DEGK and NAGH. His40 serves as the catalytic Proton donor. 305–311 provides a ligand contact to substrate; the sequence is VTTGRKR. Residues Arg311, 337 to 339, and 419 to 421 contribute to the GTP site; these read KLD and GTG.

The protein belongs to the adenylosuccinate synthetase family. As to quaternary structure, homodimer. Mg(2+) serves as cofactor.

The protein localises to the cytoplasm. It catalyses the reaction IMP + L-aspartate + GTP = N(6)-(1,2-dicarboxyethyl)-AMP + GDP + phosphate + 2 H(+). It functions in the pathway purine metabolism; AMP biosynthesis via de novo pathway; AMP from IMP: step 1/2. Plays an important role in the de novo pathway and in the salvage pathway of purine nucleotide biosynthesis. Catalyzes the first committed step in the biosynthesis of AMP from IMP. The chain is Adenylosuccinate synthetase from Kluyveromyces lactis (strain ATCC 8585 / CBS 2359 / DSM 70799 / NBRC 1267 / NRRL Y-1140 / WM37) (Yeast).